The chain runs to 185 residues: Peptide methionine sulfoxide reductase MsrA (185 aa).

Cysteine 12 is a catalytic residue.

Belongs to the MsrA Met sulfoxide reductase family.

It catalyses the reaction L-methionyl-[protein] + [thioredoxin]-disulfide + H2O = L-methionyl-(S)-S-oxide-[protein] + [thioredoxin]-dithiol. The catalysed reaction is [thioredoxin]-disulfide + L-methionine + H2O = L-methionine (S)-S-oxide + [thioredoxin]-dithiol. Functionally, has an important function as a repair enzyme for proteins that have been inactivated by oxidation. Catalyzes the reversible oxidation-reduction of methionine sulfoxide in proteins to methionine. The protein is Peptide methionine sulfoxide reductase MsrA of Granulibacter bethesdensis (strain ATCC BAA-1260 / CGDNIH1).